The primary structure comprises 457 residues: tRNA-2-methylthio-N(6)-dimethylallyladenosine synthase (457 aa).

The region spanning 3 to 120 is the MTTase N-terminal domain; that stretch reads KKVYVKTFGC…LPQMIDARRE (118 aa). The [4Fe-4S] cluster site is built by cysteine 12, cysteine 49, cysteine 83, cysteine 157, cysteine 161, and cysteine 164. In terms of domain architecture, Radical SAM core spans 143 to 377; the sequence is RVEGPSAFVS…QATIEENVAR (235 aa). One can recognise a TRAM domain in the interval 380-447; it reads QSMLGKVERI…PHSLRGELVL (68 aa).

It belongs to the methylthiotransferase family. MiaB subfamily. In terms of assembly, monomer. [4Fe-4S] cluster is required as a cofactor.

The protein resides in the cytoplasm. It carries out the reaction N(6)-dimethylallyladenosine(37) in tRNA + (sulfur carrier)-SH + AH2 + 2 S-adenosyl-L-methionine = 2-methylsulfanyl-N(6)-dimethylallyladenosine(37) in tRNA + (sulfur carrier)-H + 5'-deoxyadenosine + L-methionine + A + S-adenosyl-L-homocysteine + 2 H(+). Functionally, catalyzes the methylthiolation of N6-(dimethylallyl)adenosine (i(6)A), leading to the formation of 2-methylthio-N6-(dimethylallyl)adenosine (ms(2)i(6)A) at position 37 in tRNAs that read codons beginning with uridine. This is tRNA-2-methylthio-N(6)-dimethylallyladenosine synthase from Burkholderia pseudomallei (strain 1710b).